The following is a 755-amino-acid chain: Serine/threonine-protein kinase GL21140 (755 aa).

Over residues Gln18–Lys52 the composition is skewed to low complexity. The disordered stretch occupies residues Gln18–Ser128. Composition is skewed to basic and acidic residues over residues Ala53–Asp66 and Glu74–Asp84. The segment covering Gly87–Asn99 has biased composition (polar residues). Residues Gly100–Ser128 are compositionally biased toward low complexity. Doublecortin domains lie at His157–Asn243 and Arg314–Phe397. A Protein kinase domain is found at Tyr484–Thr742. Residues Ile490–Val498 and Lys513 each bind ATP. The active-site Proton acceptor is Asp605.

Belongs to the protein kinase superfamily. CAMK Ser/Thr protein kinase family. CaMK subfamily.

The enzyme catalyses L-seryl-[protein] + ATP = O-phospho-L-seryl-[protein] + ADP + H(+). It carries out the reaction L-threonyl-[protein] + ATP = O-phospho-L-threonyl-[protein] + ADP + H(+). This is Serine/threonine-protein kinase GL21140 from Drosophila persimilis (Fruit fly).